A 511-amino-acid chain; its full sequence is 2'-5'-oligoadenylate synthase-like protein 1 (511 aa).

Ubiquitin-like domains are found at residues 350–429 (IQVT…ISPE) and 430–506 (IQVF…EGAA).

Belongs to the 2-5A synthase family. Specifically interacts with the ligand binding domain of the thyroid receptor (TR). TRIP14 does not require the presence of thyroid hormone for its interaction. Binds MBD1.

It localises to the nucleus. It is found in the nucleolus. The protein resides in the cytoplasm. Its function is as follows. Does not have 2'-5'-OAS activity, but can bind double-stranded RNA. Displays antiviral activity via an alternative antiviral pathway independent of RNase L. This Mus musculus (Mouse) protein is 2'-5'-oligoadenylate synthase-like protein 1 (Oasl1).